Consider the following 518-residue polypeptide: Sensor protein kinase HptS (518 aa).

A run of 2 helical transmembrane segments spans residues 20 to 40 (IFPV…IYIW) and 222 to 242 (GITL…FGFI). The Histidine kinase domain maps to 297–513 (EQLIHSIEHT…LICYKIPLSR (217 aa)). Histidine 325 carries the post-translational modification Phosphohistidine; by autocatalysis.

In terms of processing, autophosphorylated.

The protein localises to the cell membrane. The catalysed reaction is ATP + protein L-histidine = ADP + protein N-phospho-L-histidine.. Functionally, member of the two-component regulatory system HptS/HptR that regulates genes involved in hexose phosphate transport system in response to changes in extracellular phosphate sources. May act as a sensor protein kinase which is autophosphorylated at a histidine residue and transfers its phosphate group to the conserved aspartic acid residue in the regulatory domain of HptS. In turn, HptS antagonizes CcpA-dependent transcription of a subset of CcpA-regulated genes involved in antibiotic susceptibility. This chain is Sensor protein kinase HptS (hptS), found in Staphylococcus aureus (strain USA300).